We begin with the raw amino-acid sequence, 158 residues long: Endoribonuclease YbeY (158 aa).

Zn(2+) contacts are provided by H124, H128, and H134.

Belongs to the endoribonuclease YbeY family. Requires Zn(2+) as cofactor.

It localises to the cytoplasm. Its function is as follows. Single strand-specific metallo-endoribonuclease involved in late-stage 70S ribosome quality control and in maturation of the 3' terminus of the 16S rRNA. The chain is Endoribonuclease YbeY from Latilactobacillus sakei subsp. sakei (strain 23K) (Lactobacillus sakei subsp. sakei).